The following is a 347-amino-acid chain: Quinolinate synthase (347 aa).

Iminosuccinate-binding residues include His-47 and Ser-68. Residue Cys-113 coordinates [4Fe-4S] cluster. Residues Tyr-139–Asn-141 and Ser-156 contribute to the iminosuccinate site. Residue Cys-200 coordinates [4Fe-4S] cluster. Iminosuccinate contacts are provided by residues His-226–Glu-228 and Thr-243. Cys-297 contributes to the [4Fe-4S] cluster binding site.

This sequence belongs to the quinolinate synthase family. Type 1 subfamily. It depends on [4Fe-4S] cluster as a cofactor.

Its subcellular location is the cytoplasm. It catalyses the reaction iminosuccinate + dihydroxyacetone phosphate = quinolinate + phosphate + 2 H2O + H(+). Its pathway is cofactor biosynthesis; NAD(+) biosynthesis; quinolinate from iminoaspartate: step 1/1. In terms of biological role, catalyzes the condensation of iminoaspartate with dihydroxyacetone phosphate to form quinolinate. This is Quinolinate synthase from Shigella dysenteriae serotype 1 (strain Sd197).